A 207-amino-acid polypeptide reads, in one-letter code: Guanylate kinase (207 aa).

Residues 4–184 (GTLYIVSAPS…ALADLHTIIR (181 aa)) enclose the Guanylate kinase-like domain. Residue 11-18 (APSGAGKS) participates in ATP binding.

The protein belongs to the guanylate kinase family.

It localises to the cytoplasm. It carries out the reaction GMP + ATP = GDP + ADP. Its function is as follows. Essential for recycling GMP and indirectly, cGMP. The protein is Guanylate kinase of Photorhabdus laumondii subsp. laumondii (strain DSM 15139 / CIP 105565 / TT01) (Photorhabdus luminescens subsp. laumondii).